Reading from the N-terminus, the 55-residue chain is Small ribosomal subunit protein eS31 (55 aa).

Residues Cys-21, Cys-24, Cys-39, and Cys-42 each contribute to the Zn(2+) site. The C4-type zinc finger occupies 21–42 (CPRCGPGVFLAEHADRFTCGRC).

The protein belongs to the eukaryotic ribosomal protein eS31 family. Part of the 30S ribosomal subunit. It depends on Zn(2+) as a cofactor.

The protein is Small ribosomal subunit protein eS31 of Thermoplasma volcanium (strain ATCC 51530 / DSM 4299 / JCM 9571 / NBRC 15438 / GSS1).